A 276-amino-acid polypeptide reads, in one-letter code: Streptothricin hydrolase (276 aa).

Cys176 serves as the catalytic Nucleophile. The disordered stretch occupies residues Pro250–Arg276. A compositionally biased stretch (low complexity) spans Ala252–Pro267.

Belongs to the isochorismatase family. As to quaternary structure, homodimer. Requires Does not require a metal cofactor. as cofactor.

It catalyses the reaction streptothricin F + H2O = streptothricin F acid. Catalyzes the hydrolysis of the amide bond of streptolidine lactam, thereby conferring streptothricin (ST) resistance. Can hydrolyze streptothricin-F and streptothricin-D. However, this strain is believed to be a ST nonproducer, which raises the possibility that its true role may not be its involvement in self-resistance to STs. May catalyze the hydrolysis of naturally occurring cyclic amide compounds that are structurally related to STs. In Streptomyces noursei (Streptomyces albulus), this protein is Streptothricin hydrolase (sttH).